Consider the following 838-residue polypeptide: Tuftelin-interacting protein 11 (838 aa).

Basic and acidic residues predominate over residues 1-13 (MSLSHLYRDGEGH). The tract at residues 1 to 51 (MSLSHLYRDGEGHLDDDDDDERENFEITDWDLQNEFNPNRQRHWQTKEEAT) is required for interaction with DHX15. Disordered stretches follow at residues 1 to 74 (MSLS…RARD) and 86 to 137 (LKKG…SGGT). Phosphoserine is present on serine 2. A compositionally biased stretch (acidic residues) spans 14–29 (LDDDDDDERENFEITD). Residues 45–65 (QTKEEATYGVWAERDSDEERP) are compositionally biased toward basic and acidic residues. Phosphoserine is present on residues serine 60, serine 96, and serine 99. The segment covering 92–101 (EEADSEDSDA) has biased composition (acidic residues). The segment covering 102–117 (EEKPVKQEDFPKDLGP) has biased composition (basic and acidic residues). Phosphoserine is present on serine 145. One can recognise a G-patch domain in the interval 150–196 (TKGIGQKLLQKMGYVPGRGLGKNAQGIINPIEAKQRKGKGAVGAYGS). The interval 193–237 (AYGSERTTQSLQDFPVADSEEEAEEEFQKELSQWRKDPSGSKKKP) is disordered. Serine 211 carries the phosphoserine modification. The segment covering 218–232 (EFQKELSQWRKDPSG) has biased composition (basic and acidic residues). The Nuclear localization signal signature appears at 701-706 (VKDKFN). A required for nuclear speckle localization region spans residues 711 to 735 (IMNRAVSSNVGAYMQPGARENIAYL).

This sequence belongs to the TFP11/STIP family. Identified in the spliceosome C complex. Found in the Intron Large (IL) complex, a post-mRNA release spliceosomal complex containing the excised intron, U2, U5 and U6 snRNPs, and splicing factors. Interacts with TUFT1. Interacts with DHX15; indicative for a recruitment of DHX15 to the IL complex. Interacts with GCFC2. Widely expressed. In tooth it is expressed in ameloblasts and odontoblasts.

The protein resides in the cytoplasm. It localises to the nucleus. Involved in pre-mRNA splicing, specifically in spliceosome disassembly during late-stage splicing events. Intron turnover seems to proceed through reactions in two lariat-intron associated complexes termed Intron Large (IL) and Intron Small (IS). In cooperation with DHX15 seems to mediate the transition of the U2, U5 and U6 snRNP-containing IL complex to the snRNP-free IS complex leading to efficient debranching and turnover of excised introns. May play a role in the differentiation of ameloblasts and odontoblasts or in the forming of the enamel extracellular matrix. The chain is Tuftelin-interacting protein 11 (Tfip11) from Mus musculus (Mouse).